The primary structure comprises 338 residues: RNA 3'-terminal phosphate cyclase (338 aa).

ATP is bound by residues Gln-103 and 283-287 (YLADQ). The Tele-AMP-histidine intermediate role is filled by His-308.

Belongs to the RNA 3'-terminal cyclase family. Type 1 subfamily.

It is found in the cytoplasm. The enzyme catalyses a 3'-end 3'-phospho-ribonucleotide-RNA + ATP = a 3'-end 2',3'-cyclophospho-ribonucleotide-RNA + AMP + diphosphate. Its function is as follows. Catalyzes the conversion of 3'-phosphate to a 2',3'-cyclic phosphodiester at the end of RNA. The mechanism of action of the enzyme occurs in 3 steps: (A) adenylation of the enzyme by ATP; (B) transfer of adenylate to an RNA-N3'P to produce RNA-N3'PP5'A; (C) and attack of the adjacent 2'-hydroxyl on the 3'-phosphorus in the diester linkage to produce the cyclic end product. The biological role of this enzyme is unknown but it is likely to function in some aspects of cellular RNA processing. The polypeptide is RNA 3'-terminal phosphate cyclase (Escherichia coli O9:H4 (strain HS)).